The following is a 476-amino-acid chain: Regulator of nonsense transcripts 3A (476 aa).

The interval 1–63 (MRSEKEGAGG…GGAGKPREEK (63 aa)) is disordered. Positions 21 to 38 (SGREKLSALEVQFHRDSQ) are enriched in basic and acidic residues. Residues 66-140 (ALSKVVIRRL…FDGYIFLDSK (75 aa)) form a required for interaction with UPF2 region. Composition is skewed to basic and acidic residues over residues 250 to 304 (REEE…RGEE), 340 to 401 (GSDK…KKGS), and 410 to 437 (AMER…KDRP). The tract at residues 250 to 476 (REEEKRRRRE…TGPEKREEAE (227 aa)) is disordered. At Ser-341 the chain carries Phosphoserine. Positions 421-434 (DDSPAPRKERLANK) are required for association with EIF4A3 and ECJ core components CASC3, MAGOH and RBM8A.

The protein belongs to the RENT3 family. In terms of assembly, found in a post-splicing messenger ribonucleoprotein (mRNP) complex. Associates with the exon junction complex (EJC). Interacts with UPF2 and RBM8A. Interacts with DHX34; the interaction is RNA-independent. As to expression, isoform 1 is strongly expressed in testis, uterus, muscle, fetal brain and spinal cord. Isoform 2 is strongly expressed in fetal brain and spinal cord.

It is found in the nucleus. The protein localises to the cytoplasm. Its function is as follows. Involved in nonsense-mediated decay (NMD) of mRNAs containing premature stop codons by associating with the nuclear exon junction complex (EJC) and serving as link between the EJC core and NMD machinery. Recruits UPF2 at the cytoplasmic side of the nuclear envelope and the subsequent formation of an UPF1-UPF2-UPF3 surveillance complex (including UPF1 bound to release factors at the stalled ribosome) is believed to activate NMD. However, UPF3A is shown to be only marginally active in NMD as compared to UPF3B. Binds spliced mRNA upstream of exon-exon junctions. In vitro, weakly stimulates translation. The sequence is that of Regulator of nonsense transcripts 3A (UPF3A) from Homo sapiens (Human).